We begin with the raw amino-acid sequence, 97 residues long: Co-chaperonin GroES (97 aa).

Belongs to the GroES chaperonin family. Heptamer of 7 subunits arranged in a ring. Interacts with the chaperonin GroEL.

It localises to the cytoplasm. Together with the chaperonin GroEL, plays an essential role in assisting protein folding. The GroEL-GroES system forms a nano-cage that allows encapsulation of the non-native substrate proteins and provides a physical environment optimized to promote and accelerate protein folding. GroES binds to the apical surface of the GroEL ring, thereby capping the opening of the GroEL channel. This Photorhabdus laumondii subsp. laumondii (strain DSM 15139 / CIP 105565 / TT01) (Photorhabdus luminescens subsp. laumondii) protein is Co-chaperonin GroES.